Consider the following 381-residue polypeptide: Anhydro-N-acetylmuramic acid kinase (381 aa).

13–20 contacts ATP; the sequence is GTSLDGID.

Belongs to the anhydro-N-acetylmuramic acid kinase family.

The catalysed reaction is 1,6-anhydro-N-acetyl-beta-muramate + ATP + H2O = N-acetyl-D-muramate 6-phosphate + ADP + H(+). Its pathway is amino-sugar metabolism; 1,6-anhydro-N-acetylmuramate degradation. It functions in the pathway cell wall biogenesis; peptidoglycan recycling. Functionally, catalyzes the specific phosphorylation of 1,6-anhydro-N-acetylmuramic acid (anhMurNAc) with the simultaneous cleavage of the 1,6-anhydro ring, generating MurNAc-6-P. Is required for the utilization of anhMurNAc either imported from the medium or derived from its own cell wall murein, and thus plays a role in cell wall recycling. The chain is Anhydro-N-acetylmuramic acid kinase from Francisella tularensis subsp. novicida (strain U112).